Reading from the N-terminus, the 176-residue chain is ATP-dependent protease subunit HslV (176 aa).

The active site involves threonine 5. Na(+) is bound by residues alanine 161, cysteine 164, and threonine 167.

This sequence belongs to the peptidase T1B family. HslV subfamily. A double ring-shaped homohexamer of HslV is capped on each side by a ring-shaped HslU homohexamer. The assembly of the HslU/HslV complex is dependent on binding of ATP.

The protein localises to the cytoplasm. It catalyses the reaction ATP-dependent cleavage of peptide bonds with broad specificity.. With respect to regulation, allosterically activated by HslU binding. Functionally, protease subunit of a proteasome-like degradation complex believed to be a general protein degrading machinery. This Caldicellulosiruptor saccharolyticus (strain ATCC 43494 / DSM 8903 / Tp8T 6331) protein is ATP-dependent protease subunit HslV.